Reading from the N-terminus, the 1052-residue chain is MSQQQNPPYGRRLILDIIKERALNEPNREWVSVPRSSDPKDGWKILTYLDAYNGINRVAHKLTQVCGAAAPGSFPTVAYIGPNDVRYLVFALGAVKAGYKALFISTRNSAEAQVNLFELTNCNVLVFDQSYKATVQPWLHEREMTAILALPADEWFPADQEDFPYNKTFEEAEWDPLMVLHTSGSTGFPKPIVARQGMLAVADQFHNLPPREDGKLMWIVEMSKRAKRLMHPMPLFHAAGMYISMLMIHYWDTPGALGIGERPLSSDLVLDYIEYADVEGMILPPAILEELSRDEKAIQSLQKLNFVSFGGGNLAPEAGDRLVENNVTLCNLISATEFTPFPFYWQYDQKLWRYFNFDTDLFGIDWRLHDGESTYEQVIVRKDKHPGLQGFFYTFPDSSEYSTKDLYKRHPTHEDFWIYQGRADNIIVFSNGEKLNPITIEETLQGHPKVMGAVVVGTNRFQPALIIEPVEHPETEEGRKALLDEIWPTVVRVNKETVAHGQIGRQYMALSTPGKPFLRAGKGTVLRPGTINMYKAEIDKIYEDAEKGVATDEVPKLDLSSSDALIVSIEKLFETSLNAPKLEADTDFFTAGVDSMQVITASRLIRAGLAAAGVNIEASALATRVIYGNPTPKRLADYLLSIVNKDSNQGTLDNEHHVMEALVEKYTRDLPTPKQNKPAPADEGQVVVITGTTGGIGSYLIDICSSSSRVSKIICLNRSEDGKARQTASSSGRGLSTDFSKCEFYHADMSRADLGLGPEVYSRLLSEVDRVIHNQWPVNFNIAVESFEPHIRGCRNLVDFSYKADKNVPIVFVSSIGTVDRWHDEDRIVPEASLDDLSLAAGGYGQSKLVSSLIFDKAAEVSGVPTEVVRVGQVAGPSSEKGYWNKQEWLPSIVASSAYLGVLPDSLGQMTTIDWTPIEAIAKLLLEVSGVIDNVPLDKINGYFHGVNPERTSWSALAPAVQEYYGDRIQKIVPLDEWLEALEKSQEKAEDVTRNPGIKLIDTYRTWSEGYKKGTKFVPLDMTRTKEYSKTMREMHAVTPELMKNWCRQWNF.

The segment at R21–Y344 is adenylation (A) domain. Residues S334 to A335, T339, and Y419 to R422 each bind AMP. A Carrier domain is found at S560 to V643. Residue S595 is modified to O-(pantetheine 4'-phosphoryl)serine. Residues G684–L979 form a carboxylic acid reductase (R) domain region. NADP(+) is bound by residues T693–I696, R718, N774–W776, S814, Y844, and K848.

This sequence belongs to the adenylate-forming reductase family. Requires Mg(2+) as cofactor.

It catalyses the reaction an aromatic aldehyde + AMP + diphosphate + NADP(+) = an aromatic carboxylate + ATP + NADPH + H(+). The enzyme catalyses a carboxylate + ATP + NADPH + H(+) = an aldehyde + AMP + diphosphate + NADP(+). The catalysed reaction is benzoate + ATP + NADPH + H(+) = benzaldehyde + AMP + diphosphate + NADP(+). It carries out the reaction (E)-cinnamate + ATP + NADPH + H(+) = (E)-cinnamaldehyde + AMP + diphosphate + NADP(+). It catalyses the reaction piperonylate + ATP + NADPH + H(+) = piperonal + AMP + diphosphate + NADP(+). The enzyme catalyses salicylate + ATP + NADPH + H(+) = salicylaldehyde + AMP + diphosphate + NADP(+). The catalysed reaction is 3-hydroxybenzoate + ATP + NADPH + H(+) = 3-hydroxybenzaldehyde + AMP + diphosphate + NADP(+). It carries out the reaction 2-methoxybenzoate + ATP + NADPH + H(+) = 2-methoxybenzaldehyde + AMP + diphosphate + NADP(+). It catalyses the reaction 3-methoxybenzoate + ATP + NADPH + H(+) = 3-methoxybenzaldehyde + AMP + diphosphate + NADP(+). The enzyme catalyses 4-hydroxybenzoate + ATP + NADPH + H(+) = 4-hydroxybenzaldehyde + AMP + diphosphate + NADP(+). The catalysed reaction is 4-methoxybenzoate + ATP + NADPH + H(+) = 4-methoxybenzaldehyde + AMP + diphosphate + NADP(+). It carries out the reaction 3-phenylpropanoate + ATP + NADPH + H(+) = 3-phenylpropanal + AMP + diphosphate + NADP(+). It catalyses the reaction picolinate + ATP + NADPH + H(+) = picolinal + AMP + diphosphate + NADP(+). The enzyme catalyses propanoate + ATP + NADPH + H(+) = propanal + AMP + diphosphate + NADP(+). The catalysed reaction is butanoate + ATP + NADPH + H(+) = butanal + AMP + diphosphate + NADP(+). It carries out the reaction pentanoate + ATP + NADPH + H(+) = pentanal + AMP + diphosphate + NADP(+). It catalyses the reaction hexanoate + ATP + NADPH + H(+) = hexanal + AMP + diphosphate + NADP(+). The enzyme catalyses heptanoate + ATP + NADPH + H(+) = heptanal + AMP + diphosphate + NADP(+). The catalysed reaction is octanoate + ATP + NADPH + H(+) = octanal + AMP + diphosphate + NADP(+). It carries out the reaction nonanoate + ATP + NADPH + H(+) = nonanal + AMP + diphosphate + NADP(+). In terms of biological role, carboxylic acid reductase that shows a broad range of substrate specificity towards aromatic acids, especially to phenyl carboxylic and phenyl acrylic acids, to convert them into their respective aldehydes. Also able to use aliphatic acids as substrates. In Neurospora crassa (strain ATCC 24698 / 74-OR23-1A / CBS 708.71 / DSM 1257 / FGSC 987), this protein is Carboxylic acid reductase.